We begin with the raw amino-acid sequence, 280 residues long: MINNLKTFILLASLTALLVVIGGLLGGSTGMLVALLFAGIMNFSAYWYSDTLVLKMYNAEPLSNNHFVYHIVSELAHRAGTSVPKVYLINNSTPNAFATGRNPENASIAVTTGLLDRLTQEEITGVLAHELAHVIHRDTLINVVSATIAGAISGIANMFMWLSMFGHNSNNEEGVHPVVGMIMMIVAPLAAGLIQMAISRSREFEADAGGARISGNPQWLASALLKLDQANHEQYFDEAETHPATAHLFIINPLNGEKLANLFSTHPSTAERVARLRAMY.

The next 2 membrane-spanning stretches (helical) occupy residues 7-26 (TFIL…GLLG) and 30-49 (GMLV…YWYS). Histidine 129 provides a ligand contact to Zn(2+). The active site involves glutamate 130. Histidine 133 contributes to the Zn(2+) binding site. The next 2 membrane-spanning stretches (helical) occupy residues 146–166 (ATIA…SMFG) and 178–198 (VVGM…QMAI). A Zn(2+)-binding site is contributed by glutamate 203.

This sequence belongs to the peptidase M48B family. The cofactor is Zn(2+).

It is found in the cell inner membrane. The polypeptide is Protease HtpX (Legionella pneumophila (strain Corby)).